A 362-amino-acid polypeptide reads, in one-letter code: Adenosine deaminase (362 aa).

Zn(2+) is bound by residues histidine 19 and histidine 21. The substrate site is built by histidine 21, aspartate 23, and glycine 181. Residue histidine 208 participates in Zn(2+) binding. The active-site Proton donor is the glutamate 211. Aspartate 300 lines the Zn(2+) pocket.

Belongs to the metallo-dependent hydrolases superfamily. Adenosine and AMP deaminases family. Adenosine deaminase subfamily. Requires Zn(2+) as cofactor.

The catalysed reaction is adenosine + H2O + H(+) = inosine + NH4(+). The enzyme catalyses 2'-deoxyadenosine + H2O + H(+) = 2'-deoxyinosine + NH4(+). Functionally, catalyzes the hydrolytic deamination of adenosine and 2-deoxyadenosine. This is Adenosine deaminase from Mycobacterium sp. (strain JLS).